Consider the following 284-residue polypeptide: tRNA-cytidine(32) 2-sulfurtransferase (284 aa).

Residues 45–50 carry the PP-loop motif motif; that stretch reads SGGKDS. [4Fe-4S] cluster-binding residues include Cys-120, Cys-123, and Cys-211.

The protein belongs to the TtcA family. Homodimer. It depends on Mg(2+) as a cofactor. The cofactor is [4Fe-4S] cluster.

The protein localises to the cytoplasm. The enzyme catalyses cytidine(32) in tRNA + S-sulfanyl-L-cysteinyl-[cysteine desulfurase] + AH2 + ATP = 2-thiocytidine(32) in tRNA + L-cysteinyl-[cysteine desulfurase] + A + AMP + diphosphate + H(+). The protein operates within tRNA modification. Its function is as follows. Catalyzes the ATP-dependent 2-thiolation of cytidine in position 32 of tRNA, to form 2-thiocytidine (s(2)C32). The sulfur atoms are provided by the cysteine/cysteine desulfurase (IscS) system. The chain is tRNA-cytidine(32) 2-sulfurtransferase from Alcanivorax borkumensis (strain ATCC 700651 / DSM 11573 / NCIMB 13689 / SK2).